Consider the following 200-residue polypeptide: Large ribosomal subunit protein uL29 (200 aa).

The segment at 1-107 is large ribosomal subunit protein uL29; sequence MTIAKELKQK…KQETKKAEVK (107 aa). Residues 92–200 form a disordered region; that stretch reads STKPESKQET…KMIKTKEKKQ (109 aa). A compositionally biased stretch (basic and acidic residues) spans 93–179; the sequence is TKPESKQETK…QEVKKVEAKK (87 aa). Positions 108-200 are unknown; it reads PKVESKPESK…KMIKTKEKKQ (93 aa). The span at 186-200 shows a compositional bias: basic residues; it reads KPVKAKMIKTKEKKQ.

The protein belongs to the universal ribosomal protein uL29 family.

The polypeptide is Large ribosomal subunit protein uL29 (Mycoplasma genitalium (strain ATCC 33530 / DSM 19775 / NCTC 10195 / G37) (Mycoplasmoides genitalium)).